The chain runs to 432 residues: Anaerobic glycerol-3-phosphate dehydrogenase subunit B (432 aa).

Belongs to the anaerobic G-3-P dehydrogenase subunit B family. As to quaternary structure, composed of a catalytic GlpA/B dimer and of membrane bound GlpC. FMN serves as cofactor.

The enzyme catalyses a quinone + sn-glycerol 3-phosphate = dihydroxyacetone phosphate + a quinol. It participates in polyol metabolism; glycerol degradation via glycerol kinase pathway; glycerone phosphate from sn-glycerol 3-phosphate (anaerobic route): step 1/1. Its function is as follows. Conversion of glycerol 3-phosphate to dihydroxyacetone. Uses fumarate or nitrate as electron acceptor. The chain is Anaerobic glycerol-3-phosphate dehydrogenase subunit B from Haemophilus influenzae (strain PittEE).